The following is a 283-amino-acid chain: uncharacterized protein (283 aa).

The signal sequence occupies residues Met1–Ala25. Cys26 carries the N-palmitoyl cysteine lipid modification. Cys26 is lipidated: S-diacylglycerol cysteine.

It belongs to the MG439/MG440 family.

It is found in the cell membrane. This is an uncharacterized protein from Mycoplasma pneumoniae (strain ATCC 29342 / M129 / Subtype 1) (Mycoplasmoides pneumoniae).